Here is a 1162-residue protein sequence, read N- to C-terminus: Lysine-specific demethylase 2A (1162 aa).

Residue Ser-28 is modified to Phosphoserine. One can recognise a JmjC domain in the interval 148-316; that stretch reads FSHTRLENMV…MQLKIYNIED (169 aa). Thr-209 contributes to the substrate binding site. Fe cation contacts are provided by His-212 and Asp-214. Lys-229 contributes to the substrate binding site. His-284 is a Fe cation binding site. A disordered region spans residues 367 to 389; it reads GLESGNGDEEAVDREPRRLSSRR. Ser-390 and Ser-394 each carry phosphoserine. A Glycyl lysine isopeptide (Lys-Gly) (interchain with G-Cter in SUMO2) cross-link involves residue Lys-505. The segment at 532–557 is disordered; sequence VPTIPITKPHTMKPAPRLTPVRPAAA. At Thr-550 the chain carries Phosphothreonine. Ser-558 is subject to Phosphoserine. The CXXC-type zinc-finger motif lies at 564–610; that stretch reads ARRRRVRCRKCKACVQGECGVCHYCRDMKKFGGPGRMKQSCVLRQCL. Zn(2+) contacts are provided by Cys-571, Cys-574, Cys-577, Cys-582, Cys-585, Cys-588, Cys-604, Cys-609, Cys-620, and Cys-623. The PHD-type zinc-finger motif lies at 617–678; it reads SVTCSLCGEV…CWECPKCYQE (62 aa). At Thr-632 the chain carries Phosphothreonine. Zn(2+) is bound by residues Cys-642, Cys-645, His-650, Cys-653, Cys-672, and Cys-675. Residue Ser-692 is modified to Phosphoserine. Positions 704–789 are disordered; the sequence is PLRSCDEPLT…PSGKKELSEV (86 aa). Thr-713 is subject to Phosphothreonine. Residues Ser-718 and Ser-731 each carry the phosphoserine modification. Composition is skewed to basic and acidic residues over residues 746 to 757 and 771 to 789; these read SDHHSASRDERF and TMVR…LSEV. Residues Ser-825, Ser-832, Ser-869, and Ser-883 each carry the phosphoserine modification. The interval 839 to 887 is disordered; that stretch reads HCPARTPQRGDEEGLGGEEEEEEEEEEEDDSAEEGGAARLNGRGSWAQD. The segment covering 851–871 has biased composition (acidic residues); it reads EGLGGEEEEEEEEEEEDDSAE. The 48-residue stretch at 889–936 folds into the F-box domain; that stretch reads DESWMQREVWMSVFRYLSRRELCECMRVCKTWYKWCCDKRLWTKIDLS. 2 LRR repeats span residues 961-982 and 984-1010; these read WTNI…LKDL and LAGC…DLRW. Arg-1020 is subject to ADP-ribosylarginine. LRR repeat units follow at residues 1048-1073, 1074-1103, 1104-1128, and 1129-1156; these read GLDI…DLSH, CSHL…NMAG, CNKL…DLRG, and CKQI…SDEK.

This sequence belongs to the JHDM1 histone demethylase family. In terms of assembly, interacts with CBX5/HP1A; the interaction promotes CBX5 localization to chromatin. The SKP1-KDM2A complex interacts with UBB. Part of a SCF (SKP1-cullin-F-box) protein ligase complex. Requires Fe(2+) as cofactor. In terms of processing, mono-ADP-ribosylated at Arg-1020 in response to DNA damage, leading to displacement from chromatin, resulting in increased dimethylation of histone H3 at 'Lys-36'. In terms of tissue distribution, widely expressed, with highest levels in brain, testis and ovary, followed by lung.

The protein resides in the nucleus. It localises to the nucleoplasm. The protein localises to the chromosome. It carries out the reaction N(6),N(6)-dimethyl-L-lysyl(36)-[histone H3] + 2 2-oxoglutarate + 2 O2 = L-lysyl(36)-[histone H3] + 2 formaldehyde + 2 succinate + 2 CO2. Its function is as follows. Histone demethylase that specifically demethylates 'Lys-36' of histone H3, thereby playing a central role in histone code. Preferentially demethylates dimethylated H3 'Lys-36' residue while it has weak or no activity for mono- and tri-methylated H3 'Lys-36'. May also recognize and bind to some phosphorylated proteins and promote their ubiquitination and degradation. Required to maintain the heterochromatic state. Associates with centromeres and represses transcription of small non-coding RNAs that are encoded by the clusters of satellite repeats at the centromere. Required to sustain centromeric integrity and genomic stability, particularly during mitosis. Regulates circadian gene expression by repressing the transcriptional activator activity of CLOCK-BMAL1 heterodimer and RORA in a catalytically-independent manner. The protein is Lysine-specific demethylase 2A (KDM2A) of Homo sapiens (Human).